A 252-amino-acid polypeptide reads, in one-letter code: Triosephosphate isomerase (252 aa).

Substrate is bound at residue 10-12; sequence NWK. Catalysis depends on histidine 96, which acts as the Electrophile. The Proton acceptor role is filled by glutamate 168. Substrate-binding positions include glycine 174, serine 214, and 235–236; that span reads GG.

Belongs to the triosephosphate isomerase family. Homodimer.

Its subcellular location is the cytoplasm. The enzyme catalyses D-glyceraldehyde 3-phosphate = dihydroxyacetone phosphate. Its pathway is carbohydrate biosynthesis; gluconeogenesis. It functions in the pathway carbohydrate degradation; glycolysis; D-glyceraldehyde 3-phosphate from glycerone phosphate: step 1/1. Its function is as follows. Involved in the gluconeogenesis. Catalyzes stereospecifically the conversion of dihydroxyacetone phosphate (DHAP) to D-glyceraldehyde-3-phosphate (G3P). This chain is Triosephosphate isomerase, found in Lactococcus lactis subsp. cremoris (strain MG1363).